Here is a 1456-residue protein sequence, read N- to C-terminus: ABC transporter G family member 44 (1456 aa).

Residues Ala169–Asp442 enclose the ABC transporter 1 domain. Gly202 to Thr209 contacts ATP. An ABC transmembrane type-2 1 domain is found at Glu520–Phe733. A run of 6 helical transmembrane segments spans residues Phe538–Phe558, Gly571–Ser591, Ile626–Phe646, Leu658–Gly678, Val682–Ile702, and Ile768–Leu788. Residues Asn812 to Glu844 form a disordered region. Residues Thr814 to Arg835 are compositionally biased toward polar residues. The region spanning Val858 to Glu1110 is the ABC transporter 2 domain. Gly903–Thr910 serves as a coordination point for ATP. Residues Thr1183 to Phe1397 enclose the ABC transmembrane type-2 2 domain. Helical transmembrane passes span Tyr1202–Trp1222, Tyr1242–Val1262, Leu1290–Phe1310, Phe1317–Leu1337, Ile1347–Ile1367, Trp1378–Gly1398, and Phe1425–Ser1445.

This sequence belongs to the ABC transporter superfamily. ABCG family. PDR (TC 3.A.1.205) subfamily.

It is found in the membrane. May be a general defense protein. The protein is ABC transporter G family member 44 of Oryza sativa subsp. japonica (Rice).